The sequence spans 343 residues: Gene 34 protein (343 aa).

The polypeptide is Gene 34 protein (34) (Alcelaphine herpesvirus 1 (strain C500) (AlHV-1)).